The primary structure comprises 389 residues: Ankyrin repeat domain-containing protein 42 (389 aa).

Residues 1 to 21 (MPGVANSGPSTSSRETANPCS) form a disordered region. The segment covering 7–19 (SGPSTSSRETANP) has biased composition (polar residues). 9 ANK repeats span residues 25–60 (VHFGSIHDAVRAGDVKQLSEIVCLHWLLWHGADITH), 64–93 (RGWTASHIAAIRGQDACVQALIMNGANLTA), 97–126 (RGCTPLHLAATHGHSFTLQIMLRSGVDPSV), 130–159 (REWRPVHYAAFHGRLGCLQLLVKWGCSIED), 163–192 (NGNLPVHLAAMEGHLHCFKFLVSRMSSATQ), 200–232 (NGENVLDLAQRFFKQNILQFIQGAEYEGKDLED), 235–265 (TLAFPGHVAAFKGDLGMLKKLVEDGVININE), 269–298 (NGSTPMHKAAGQGHIECLQWLIKMGADSNI), and 302–332 (AGERPSDVAKRFAHLAAVKLLEELQKYDIDD).

The protein is Ankyrin repeat domain-containing protein 42 (ANKRD42) of Homo sapiens (Human).